The primary structure comprises 449 residues: Exodeoxyribonuclease 7 large subunit (449 aa).

The protein belongs to the XseA family. As to quaternary structure, heterooligomer composed of large and small subunits.

Its subcellular location is the cytoplasm. The enzyme catalyses Exonucleolytic cleavage in either 5'- to 3'- or 3'- to 5'-direction to yield nucleoside 5'-phosphates.. In terms of biological role, bidirectionally degrades single-stranded DNA into large acid-insoluble oligonucleotides, which are then degraded further into small acid-soluble oligonucleotides. The sequence is that of Exodeoxyribonuclease 7 large subunit from Latilactobacillus sakei subsp. sakei (strain 23K) (Lactobacillus sakei subsp. sakei).